We begin with the raw amino-acid sequence, 343 residues long: Anthranilate phosphoribosyltransferase (343 aa).

5-phospho-alpha-D-ribose 1-diphosphate-binding positions include Gly-84, 87 to 88, Thr-92, 94 to 97, 112 to 120, and Ser-124; these read GD, NIST, and KHGNRSASS. Anthranilate is bound at residue Gly-84. Ser-96 lines the Mg(2+) pocket. Anthranilate is bound at residue Asn-115. Arg-170 contributes to the anthranilate binding site. Residues Asp-229 and Glu-230 each coordinate Mg(2+).

It belongs to the anthranilate phosphoribosyltransferase family. Homodimer. Mg(2+) serves as cofactor.

The enzyme catalyses N-(5-phospho-beta-D-ribosyl)anthranilate + diphosphate = 5-phospho-alpha-D-ribose 1-diphosphate + anthranilate. The protein operates within amino-acid biosynthesis; L-tryptophan biosynthesis; L-tryptophan from chorismate: step 2/5. Catalyzes the transfer of the phosphoribosyl group of 5-phosphorylribose-1-pyrophosphate (PRPP) to anthranilate to yield N-(5'-phosphoribosyl)-anthranilate (PRA). The chain is Anthranilate phosphoribosyltransferase from Bordetella bronchiseptica (strain ATCC BAA-588 / NCTC 13252 / RB50) (Alcaligenes bronchisepticus).